We begin with the raw amino-acid sequence, 464 residues long: Bifunctional protein GlmU (464 aa).

A pyrophosphorylase region spans residues Met1–Pro231. Residues Lys20, Gln78, Gly83–Thr84, Ser105–Asp107, Gly142, Glu156, and Asn229 contribute to the UDP-N-acetyl-alpha-D-glucosamine site. Asp107 contacts Mg(2+). Asn229 lines the Mg(2+) pocket. Residues Val232–Gln252 are linker. Positions Gly253–Lys464 are N-acetyltransferase. 2 residues coordinate UDP-N-acetyl-alpha-D-glucosamine: Arg343 and Lys361. His373 functions as the Proton acceptor in the catalytic mechanism. Positions 376 and 387 each coordinate UDP-N-acetyl-alpha-D-glucosamine. Acetyl-CoA-binding positions include Ala390, Asn396–Tyr397, Ser415, Gly433, and Arg450.

It in the N-terminal section; belongs to the N-acetylglucosamine-1-phosphate uridyltransferase family. This sequence in the C-terminal section; belongs to the transferase hexapeptide repeat family. In terms of assembly, homotrimer. Requires Mg(2+) as cofactor.

The protein localises to the cytoplasm. It carries out the reaction alpha-D-glucosamine 1-phosphate + acetyl-CoA = N-acetyl-alpha-D-glucosamine 1-phosphate + CoA + H(+). It catalyses the reaction N-acetyl-alpha-D-glucosamine 1-phosphate + UTP + H(+) = UDP-N-acetyl-alpha-D-glucosamine + diphosphate. It participates in nucleotide-sugar biosynthesis; UDP-N-acetyl-alpha-D-glucosamine biosynthesis; N-acetyl-alpha-D-glucosamine 1-phosphate from alpha-D-glucosamine 6-phosphate (route II): step 2/2. The protein operates within nucleotide-sugar biosynthesis; UDP-N-acetyl-alpha-D-glucosamine biosynthesis; UDP-N-acetyl-alpha-D-glucosamine from N-acetyl-alpha-D-glucosamine 1-phosphate: step 1/1. Its pathway is bacterial outer membrane biogenesis; LPS lipid A biosynthesis. Its function is as follows. Catalyzes the last two sequential reactions in the de novo biosynthetic pathway for UDP-N-acetylglucosamine (UDP-GlcNAc). The C-terminal domain catalyzes the transfer of acetyl group from acetyl coenzyme A to glucosamine-1-phosphate (GlcN-1-P) to produce N-acetylglucosamine-1-phosphate (GlcNAc-1-P), which is converted into UDP-GlcNAc by the transfer of uridine 5-monophosphate (from uridine 5-triphosphate), a reaction catalyzed by the N-terminal domain. The chain is Bifunctional protein GlmU from Albidiferax ferrireducens (strain ATCC BAA-621 / DSM 15236 / T118) (Rhodoferax ferrireducens).